Consider the following 983-residue polypeptide: Probable beta-galactosidase C (983 aa).

The N-terminal stretch at 1-23 (MRIFSFLFLLLLGILTGQGLVSG) is a signal peptide. Substrate is bound by residues tyrosine 82, asparagine 127, alanine 128, glutamate 129, and asparagine 187. Catalysis depends on glutamate 188, which acts as the Proton donor. Residue asparagine 197 is glycosylated (N-linked (GlcNAc...) asparagine). Tyrosine 251 provides a ligand contact to substrate. A disulfide bridge connects residues cysteine 257 and cysteine 304. Asparagine 276 carries an N-linked (GlcNAc...) asparagine glycan. Glutamate 287 functions as the Nucleophile in the catalytic mechanism. Residue tyrosine 353 coordinates substrate. N-linked (GlcNAc...) asparagine glycosylation is found at asparagine 391, asparagine 434, asparagine 466, asparagine 516, asparagine 601, asparagine 676, asparagine 714, asparagine 719, and asparagine 804.

This sequence belongs to the glycosyl hydrolase 35 family.

Its subcellular location is the secreted. The enzyme catalyses Hydrolysis of terminal non-reducing beta-D-galactose residues in beta-D-galactosides.. In terms of biological role, cleaves beta-linked terminal galactosyl residues from gangliosides, glycoproteins, and glycosaminoglycans. This is Probable beta-galactosidase C (lacC) from Neosartorya fischeri (strain ATCC 1020 / DSM 3700 / CBS 544.65 / FGSC A1164 / JCM 1740 / NRRL 181 / WB 181) (Aspergillus fischerianus).